An 84-amino-acid polypeptide reads, in one-letter code: Large ribosomal subunit protein bL27 (84 aa).

This sequence belongs to the bacterial ribosomal protein bL27 family.

The protein is Large ribosomal subunit protein bL27 of Buchnera aphidicola subsp. Acyrthosiphon pisum (strain Tuc7).